The primary structure comprises 166 residues: Myosin regulatory light chain 2, ventricular/cardiac muscle isoform (166 aa).

Ala-2 is subject to N,N,N-trimethylalanine. 2 positions are modified to phosphoserine; by MLCK: Ser-14 and Ser-15. Ser-19 is modified (phosphoserine). EF-hand domains lie at 24–59 (TQIQ…LGRV), 94–129 (DPEE…QAER), and 130–165 (FSKE…GEEK). Residues Asp-37, Asn-39, Asp-41, and Asp-48 each coordinate Ca(2+). Thr-52 is subject to Phosphothreonine.

As to quaternary structure, myosin is a hexamer of 2 heavy chains and 4 light chains. Interacts with MYOC. In terms of processing, N-terminus is methylated by METTL11A/NTM1. Post-translationally, phosphorylated by MYLK3 and MYLK2; promotes cardiac muscle contraction and function. Dephosphorylated by PPP1CB complexed to PPP1R12B. The phosphorylated form in adult is expressed as gradients across the heart from endocardium (low phosphorylation) to epicardium (high phosphorylation); regulates cardiac torsion and workload distribution. In terms of tissue distribution, abundantly expressed in both cardiac and slow skeletal muscle. In the adult heart, the phosphorylated form is highly expressed in epicardium and weakly in endocardium.

It localises to the cytoplasm. Its subcellular location is the myofibril. The protein resides in the sarcomere. The protein localises to the a band. In terms of biological role, contractile protein that plays a role in heart development and function. Following phosphorylation, plays a role in cross-bridge cycling kinetics and cardiac muscle contraction by increasing myosin lever arm stiffness and promoting myosin head diffusion; as a consequence of the increase in maximum contraction force and calcium sensitivity of contraction force. These events altogether slow down myosin kinetics and prolong duty cycle resulting in accumulated myosins being cooperatively recruited to actin binding sites to sustain thin filament activation as a means to fine-tune myofilament calcium sensitivity to force. During cardiogenesis plays an early role in cardiac contractility by promoting cardiac myofibril assembly. The protein is Myosin regulatory light chain 2, ventricular/cardiac muscle isoform of Mus musculus (Mouse).